A 444-amino-acid chain; its full sequence is Na(+)/H(+) antiporter NhaA 2 (444 aa).

Helical transmembrane passes span 21–41 (FSGI…NSPF), 64–84 (FSIH…MVGL), 102–122 (AFPV…YYVL), 131–151 (GFGI…LLLG), 160–180 (VFLV…IAVF), 185–205 (EGLH…LTGI), 212–232 (HLGV…HSGI), 307–327 (ALQP…NAGV), 342–362 (LGVI…LTFL), 377–397 (WSHI…SMFV), and 413–433 (IAIL…LIIN).

Belongs to the NhaA Na(+)/H(+) (TC 2.A.33) antiporter family.

It is found in the cell inner membrane. The catalysed reaction is Na(+)(in) + 2 H(+)(out) = Na(+)(out) + 2 H(+)(in). Na(+)/H(+) antiporter that extrudes sodium in exchange for external protons. This chain is Na(+)/H(+) antiporter NhaA 2, found in Helicobacter hepaticus (strain ATCC 51449 / 3B1).